Here is a 140-residue protein sequence, read N- to C-terminus: MADGRPATLDDFCRRFDISFFDLRLTCIFCSHTVDLADLALFYLKKLSLVFRGNCYYACCSECLRLSALFEQENYFQCSIKAVHLEEIAQKKIKEICIRCICCLRLLDIVEKLDLLYSDETCYLIRGLWRGYCRNCIRKQ.

2 zinc fingers span residues 27–63 (CIFC…CSEC) and 100–136 (CICC…CRNC).

The protein belongs to the papillomaviridae E6 protein family. In terms of assembly, forms homodimers. Interacts with ubiquitin-protein ligase UBE3A/E6-AP; this interaction stimulates UBE3A ubiquitin activity. Interacts with host BAK1.

It localises to the host cytoplasm. Its subcellular location is the host nucleus. Functionally, plays a major role in the induction and maintenance of cellular transformation. E6 associates with host UBE3A/E6-AP ubiquitin-protein ligase and modulates its activity. Protects host keratinocytes from apoptosis by mediating the degradation of host BAK1. May also inhibit host immune response. In Human papillomavirus 4, this protein is Protein E6.